The primary structure comprises 110 residues: Large ribosomal subunit protein uL22 (110 aa).

It belongs to the universal ribosomal protein uL22 family. Part of the 50S ribosomal subunit.

This protein binds specifically to 23S rRNA; its binding is stimulated by other ribosomal proteins, e.g. L4, L17, and L20. It is important during the early stages of 50S assembly. It makes multiple contacts with different domains of the 23S rRNA in the assembled 50S subunit and ribosome. Its function is as follows. The globular domain of the protein is located near the polypeptide exit tunnel on the outside of the subunit, while an extended beta-hairpin is found that lines the wall of the exit tunnel in the center of the 70S ribosome. This is Large ribosomal subunit protein uL22 from Yersinia enterocolitica serotype O:8 / biotype 1B (strain NCTC 13174 / 8081).